The primary structure comprises 213 residues: Skin granule protein (213 aa).

The N-terminal stretch at 1–26 (METMYHRFLCIPFLLILGLAQGQSKG) is a signal peptide. 3 consecutive repeat copies span residues 27–48 (LQTV…IRTG), 49–70 (LQPI…IRTG), and 71–92 (LQPI…IRTG). Residues 27–104 (LQTVTTFRTG…PIATFQTGVQ (78 aa)) are 4 X 22 AA approximate tandem repeats. The 4; truncated repeat unit spans residues 93-104 (LQPIATFQTGVQ). Residues 162–213 (WHGGRNGHKMKKLGKKKHHKNRHGGKNHHKMKKIGKHHGGGRKFGKKHRHHK) form a disordered region. The segment covering 166–213 (RNGHKMKKLGKKKHHKNRHGGKNHHKMKKIGKHHGGGRKFGKKHRHHK) has biased composition (basic residues).

It is found in the secreted. This Xenopus laevis (African clawed frog) protein is Skin granule protein (sgp).